The sequence spans 383 residues: Succinate--CoA ligase [ADP-forming] subunit beta (383 aa).

One can recognise an ATP-grasp domain in the interval 9–241 (KEVLHKFNVS…YDEEVKEEIE (233 aa)). Residues lysine 46, 53–55 (GRG), glutamate 99, serine 102, and glutamate 107 each bind ATP. The Mg(2+) site is built by asparagine 196 and aspartate 210. Substrate-binding positions include asparagine 261 and 318–320 (GIM).

It belongs to the succinate/malate CoA ligase beta subunit family. In terms of assembly, heterotetramer of two alpha and two beta subunits. Requires Mg(2+) as cofactor.

It carries out the reaction succinate + ATP + CoA = succinyl-CoA + ADP + phosphate. It catalyses the reaction GTP + succinate + CoA = succinyl-CoA + GDP + phosphate. It functions in the pathway carbohydrate metabolism; tricarboxylic acid cycle; succinate from succinyl-CoA (ligase route): step 1/1. Succinyl-CoA synthetase functions in the citric acid cycle (TCA), coupling the hydrolysis of succinyl-CoA to the synthesis of either ATP or GTP and thus represents the only step of substrate-level phosphorylation in the TCA. The beta subunit provides nucleotide specificity of the enzyme and binds the substrate succinate, while the binding sites for coenzyme A and phosphate are found in the alpha subunit. In Wolbachia sp. subsp. Drosophila simulans (strain wRi), this protein is Succinate--CoA ligase [ADP-forming] subunit beta.